The primary structure comprises 41 residues: Large ribosomal subunit protein bL36 (41 aa).

This sequence belongs to the bacterial ribosomal protein bL36 family.

The sequence is that of Large ribosomal subunit protein bL36 from Sinorhizobium fredii (strain NBRC 101917 / NGR234).